Here is a 181-residue protein sequence, read N- to C-terminus: CDP-diacylglycerol--glycerol-3-phosphate 3-phosphatidyltransferase (181 aa).

4 helical membrane passes run 8 to 28 (PNYL…TFYI), 35 to 55 (MLGA…GYIA), 64 to 84 (FGKM…IIML), and 148 to 168 (IIYL…LTII).

Belongs to the CDP-alcohol phosphatidyltransferase class-I family.

It localises to the cell membrane. It carries out the reaction a CDP-1,2-diacyl-sn-glycerol + sn-glycerol 3-phosphate = a 1,2-diacyl-sn-glycero-3-phospho-(1'-sn-glycero-3'-phosphate) + CMP + H(+). It participates in phospholipid metabolism; phosphatidylglycerol biosynthesis; phosphatidylglycerol from CDP-diacylglycerol: step 1/2. This protein catalyzes the committed step to the synthesis of the acidic phospholipids. The protein is CDP-diacylglycerol--glycerol-3-phosphate 3-phosphatidyltransferase (pgsA) of Rickettsia bellii (strain RML369-C).